The sequence spans 1300 residues: Serine protease EspP (1300 aa).

The first 55 residues, 1–55, serve as a signal peptide directing secretion; it reads MNKIYSLKYSHITGGLIAVSELSGRVSSRATGKKKHKRILALCFLGLLQSSYSFA. The region spanning 57 to 311 is the Peptidase S6 domain; that stretch reads QMDISNFYIR…NQTTIDNLKN (255 aa). Catalysis depends on charge relay system residues histidine 127, aspartate 156, and serine 263. The Autotransporter domain occupies 1034–1300; it reads DINGEAGAWA…AVNANFRYSF (267 aa).

In terms of processing, cleaved to release the mature protein from the outer membrane.

The protein resides in the periplasm. Its subcellular location is the secreted. It localises to the cell surface. It is found in the cell outer membrane. With respect to regulation, inhibition of cytotoxic activity by phenylmethylsulfonyl fluoride. Its function is as follows. Serine protease capable of cleaving pepsin A and human coagulation factor V, which may contribute to the mucosal hemorrhage observed in hemorrhagic colitis. This Escherichia coli O157:H7 protein is Serine protease EspP (espP).